Reading from the N-terminus, the 296-residue chain is Bifunctional protein FolD (296 aa).

Residues 168–170, serine 197, and threonine 238 contribute to the NADP(+) site; that span reads GRS.

Belongs to the tetrahydrofolate dehydrogenase/cyclohydrolase family. As to quaternary structure, homodimer.

It carries out the reaction (6R)-5,10-methylene-5,6,7,8-tetrahydrofolate + NADP(+) = (6R)-5,10-methenyltetrahydrofolate + NADPH. It catalyses the reaction (6R)-5,10-methenyltetrahydrofolate + H2O = (6R)-10-formyltetrahydrofolate + H(+). The protein operates within one-carbon metabolism; tetrahydrofolate interconversion. Functionally, catalyzes the oxidation of 5,10-methylenetetrahydrofolate to 5,10-methenyltetrahydrofolate and then the hydrolysis of 5,10-methenyltetrahydrofolate to 10-formyltetrahydrofolate. This chain is Bifunctional protein FolD, found in Porphyromonas gingivalis (strain ATCC BAA-308 / W83).